Consider the following 897-residue polypeptide: Probable bifunctional chitinase/lysozyme (897 aa).

The signal sequence occupies residues methionine 1 to alanine 24. The Chitin-binding type-3 1 domain maps to methionine 25–glutamate 91. Disordered regions lie at residues cysteine 90–serine 127, threonine 182–lysine 222, and glutamine 287–asparagine 333. The span at serine 95 to asparagine 111 shows a compositional bias: low complexity. Composition is skewed to polar residues over residues glycine 113–serine 127 and threonine 182–proline 197. One can recognise a Chitin-binding type-3 2 domain in the interval valine 128–threonine 194. Pro residues predominate over residues glutamine 198–glutamine 216. Residues valine 229 to serine 295 enclose the Chitin-binding type-3 3 domain. Positions aspartate 309–proline 318 are enriched in pro residues. The segment covering asparagine 322–asparagine 333 has biased composition (polar residues). Chitin-binding type-3 domains lie at leucine 337–glutamate 403 and alanine 459–asparagine 529. Residues lysine 586–leucine 877 form the GH18 domain. Cysteine 628 and cysteine 673 are disulfide-bonded. Glutamate 700 acts as the Proton donor in catalysis.

Belongs to the glycosyl hydrolase 18 family. Chitinase class II subfamily.

The protein resides in the periplasm. It catalyses the reaction Random endo-hydrolysis of N-acetyl-beta-D-glucosaminide (1-&gt;4)-beta-linkages in chitin and chitodextrins.. It carries out the reaction Hydrolysis of (1-&gt;4)-beta-linkages between N-acetylmuramic acid and N-acetyl-D-glucosamine residues in a peptidoglycan and between N-acetyl-D-glucosamine residues in chitodextrins.. In terms of biological role, bifunctional enzyme with lysozyme/chitinase activity. The chain is Probable bifunctional chitinase/lysozyme (chiA) from Escherichia coli (strain K12).